A 128-amino-acid polypeptide reads, in one-letter code: Leucine-rich single-pass membrane protein 1 (128 aa).

The residue at position 24 (S24) is a Phosphoserine. A helical transmembrane segment spans residues 65 to 85 (VGLIIVLIISLALVSFVIFLI). Positions 87 to 111 (QTENKMEDVSRRLAAEGKDIDDLKK) form a coiled coil.

It localises to the membrane. This Bos taurus (Bovine) protein is Leucine-rich single-pass membrane protein 1 (LSMEM1).